The chain runs to 535 residues: Putative beta-glucosidase 41 (535 aa).

A signal peptide spans 1-27 (MESLMRLVLVLFPFFVVFFVPLDHVSS). An a beta-D-glucoside-binding site is contributed by Q49. N118 carries N-linked (GlcNAc...) asparagine glycosylation. Residues H151 and 196–197 (NE) contribute to the a beta-D-glucoside site. E197 functions as the Proton donor in the catalytic mechanism. Residues C216 and C224 are joined by a disulfide bond. A beta-D-glucoside contacts are provided by Y340 and E413. Catalysis depends on E413, which acts as the Nucleophile. An N-linked (GlcNAc...) asparagine glycan is attached at N445. Residues W463, 470–471 (EW), and F479 contribute to the a beta-D-glucoside site. An N-linked (GlcNAc...) asparagine glycan is attached at N489.

This sequence belongs to the glycosyl hydrolase 1 family.

It catalyses the reaction Hydrolysis of terminal, non-reducing beta-D-glucosyl residues with release of beta-D-glucose.. This chain is Putative beta-glucosidase 41, found in Arabidopsis thaliana (Mouse-ear cress).